Here is a 308-residue protein sequence, read N- to C-terminus: Porphobilinogen deaminase (308 aa).

C240 carries the post-translational modification S-(dipyrrolylmethanemethyl)cysteine.

It belongs to the HMBS family. Monomer. Dipyrromethane serves as cofactor.

It catalyses the reaction 4 porphobilinogen + H2O = hydroxymethylbilane + 4 NH4(+). It participates in porphyrin-containing compound metabolism; protoporphyrin-IX biosynthesis; coproporphyrinogen-III from 5-aminolevulinate: step 2/4. Its function is as follows. Tetrapolymerization of the monopyrrole PBG into the hydroxymethylbilane pre-uroporphyrinogen in several discrete steps. In Maridesulfovibrio salexigens (strain ATCC 14822 / DSM 2638 / NCIMB 8403 / VKM B-1763) (Desulfovibrio salexigens), this protein is Porphobilinogen deaminase.